The following is a 428-amino-acid chain: Glutamate-1-semialdehyde 2,1-aminomutase 1 (428 aa).

K268 is subject to N6-(pyridoxal phosphate)lysine.

It belongs to the class-III pyridoxal-phosphate-dependent aminotransferase family. HemL subfamily. As to quaternary structure, homodimer. Requires pyridoxal 5'-phosphate as cofactor.

The protein localises to the cytoplasm. It carries out the reaction (S)-4-amino-5-oxopentanoate = 5-aminolevulinate. It participates in porphyrin-containing compound metabolism; protoporphyrin-IX biosynthesis; 5-aminolevulinate from L-glutamyl-tRNA(Glu): step 2/2. This is Glutamate-1-semialdehyde 2,1-aminomutase 1 from Geobacillus kaustophilus (strain HTA426).